The following is a 214-amino-acid chain: tRNA (guanine-N(7)-)-methyltransferase (214 aa).

S-adenosyl-L-methionine contacts are provided by Glu-43, Glu-68, Asp-95, and Asp-117. Residue Asp-117 is part of the active site. Substrate is bound by residues Lys-121, Asp-153, and 190–193 (TEYE).

This sequence belongs to the class I-like SAM-binding methyltransferase superfamily. TrmB family.

It catalyses the reaction guanosine(46) in tRNA + S-adenosyl-L-methionine = N(7)-methylguanosine(46) in tRNA + S-adenosyl-L-homocysteine. Its pathway is tRNA modification; N(7)-methylguanine-tRNA biosynthesis. Functionally, catalyzes the formation of N(7)-methylguanine at position 46 (m7G46) in tRNA. The protein is tRNA (guanine-N(7)-)-methyltransferase of Staphylococcus aureus (strain Mu3 / ATCC 700698).